A 436-amino-acid chain; its full sequence is Methylenetetrahydrofolate--tRNA-(uracil-5-)-methyltransferase TrmFO (436 aa).

FAD is bound at residue glycine 10–glycine 15.

Belongs to the MnmG family. TrmFO subfamily. It depends on FAD as a cofactor.

The protein resides in the cytoplasm. The catalysed reaction is uridine(54) in tRNA + (6R)-5,10-methylene-5,6,7,8-tetrahydrofolate + NADH + H(+) = 5-methyluridine(54) in tRNA + (6S)-5,6,7,8-tetrahydrofolate + NAD(+). It carries out the reaction uridine(54) in tRNA + (6R)-5,10-methylene-5,6,7,8-tetrahydrofolate + NADPH + H(+) = 5-methyluridine(54) in tRNA + (6S)-5,6,7,8-tetrahydrofolate + NADP(+). Functionally, catalyzes the folate-dependent formation of 5-methyl-uridine at position 54 (M-5-U54) in all tRNAs. The protein is Methylenetetrahydrofolate--tRNA-(uracil-5-)-methyltransferase TrmFO of Staphylococcus carnosus (strain TM300).